Consider the following 147-residue polypeptide: D-aminoacyl-tRNA deacylase (147 aa).

Positions 138–139 (GP) match the Gly-cisPro motif, important for rejection of L-amino acids motif.

This sequence belongs to the DTD family. As to quaternary structure, homodimer.

The protein localises to the cytoplasm. It carries out the reaction glycyl-tRNA(Ala) + H2O = tRNA(Ala) + glycine + H(+). The enzyme catalyses a D-aminoacyl-tRNA + H2O = a tRNA + a D-alpha-amino acid + H(+). Functionally, an aminoacyl-tRNA editing enzyme that deacylates mischarged D-aminoacyl-tRNAs. Also deacylates mischarged glycyl-tRNA(Ala), protecting cells against glycine mischarging by AlaRS. Acts via tRNA-based rather than protein-based catalysis; rejects L-amino acids rather than detecting D-amino acids in the active site. By recycling D-aminoacyl-tRNA to D-amino acids and free tRNA molecules, this enzyme counteracts the toxicity associated with the formation of D-aminoacyl-tRNA entities in vivo and helps enforce protein L-homochirality. In Prosthecochloris aestuarii (strain DSM 271 / SK 413), this protein is D-aminoacyl-tRNA deacylase.